Reading from the N-terminus, the 449-residue chain is GTPase Der (449 aa).

EngA-type G domains lie at 3–167 (SIVA…PDEP) and 175–350 (TNIA…EQYS). GTP is bound by residues 9–16 (GRPNVGKS), 56–60 (DTGGF), 119–122 (NKVD), 181–188 (GRPNVGKS), 228–232 (DTAGI), and 293–296 (NKWD). One can recognise a KH-like domain in the interval 351 to 435 (RRVTTSELNR…PFRLLFRGRE (85 aa)).

Belongs to the TRAFAC class TrmE-Era-EngA-EngB-Septin-like GTPase superfamily. EngA (Der) GTPase family. In terms of assembly, associates with the 50S ribosomal subunit.

In terms of biological role, GTPase that plays an essential role in the late steps of ribosome biogenesis. This Trichlorobacter lovleyi (strain ATCC BAA-1151 / DSM 17278 / SZ) (Geobacter lovleyi) protein is GTPase Der.